The following is a 475-amino-acid chain: U3 small nucleolar RNA-interacting protein 2 (475 aa).

Positions 1–75 are disordered; the sequence is MSATAAARKR…EEEEELEETA (75 aa). Residues 8 to 40 carry the Nuclear localization signal motif; it reads RKRGKPASGAGAGAGAGKRRRKADSAGDRGKSK. The residue at position 10 (Arg10) is an Omega-N-methylarginine. 2 positions are modified to N6-acetyllysine: Lys12 and Lys25. 4 positions are modified to phosphoserine: Ser50, Ser51, Ser53, and Ser57. Acidic residues predominate over residues 65-74; sequence EEEEEELEET. Lys113 is covalently cross-linked (Glycyl lysine isopeptide (Lys-Gly) (interchain with G-Cter in SUMO2)). WD repeat units lie at residues 144–183, 197–236, 239–278, 281–320, 322–360, 374–413, and 419–460; these read GHQL…KLHV, GHSS…HLYT, GHRD…YVET, GHQD…QLVF, GHQG…PLAL, EQPF…RQLD, and PLVG…NSVC.

This sequence belongs to the WD repeat RRP9 family. Interacts specifically with the U3 small nucleolar RNA (U3 snoRNA). Binds a sub-fragment of the U3 snoRNA surrounding the B/C motif (3UBC). This association with the U3BC RNA is dependent on the binding of a protein called 15.5K to the box B/C motif. The association of the protein with the U3BC RNA was found to be also dependent on a conserved RNA structure that flanks the box B/C motif. Part of the small subunit (SSU) processome, composed of more than 70 proteins and the RNA chaperone small nucleolar RNA (snoRNA) U3. Acetylation at Lys-12 and Lys-25 by KAT2B/PCAF under stress impairs pre-rRNA processing. Deacetylation by SIRT7 enhances RRP9-binding to U3 snoRNA, which is a prerequisite for pre-rRNA processing.

The protein resides in the nucleus. It is found in the nucleolus. In terms of biological role, component of a nucleolar small nuclear ribonucleoprotein particle (snoRNP) thought to participate in the processing and modification of pre-ribosomal RNA (pre-rRNA). Part of the small subunit (SSU) processome, first precursor of the small eukaryotic ribosomal subunit. During the assembly of the SSU processome in the nucleolus, many ribosome biogenesis factors, an RNA chaperone and ribosomal proteins associate with the nascent pre-rRNA and work in concert to generate RNA folding, modifications, rearrangements and cleavage as well as targeted degradation of pre-ribosomal RNA by the RNA exosome. This Homo sapiens (Human) protein is U3 small nucleolar RNA-interacting protein 2.